Here is a 568-residue protein sequence, read N- to C-terminus: Zinc finger protein 583 (568 aa).

Residues 6–77 (LTFEDVSVNF…QKKGARDTCP (72 aa)) form the KRAB domain. 12 consecutive C2H2-type zinc fingers follow at residues 211 to 233 (LKCS…QRIH), 239 to 261 (YACV…KRIH), 267 to 289 (YECK…QRVH), 295 to 317 (YQCK…QRIH), 323 to 345 (FECI…QRIH), 351 to 373 (YVCH…QRIH), 379 to 401 (YECK…QRVH), 407 to 429 (YECK…QRVH), 435 to 457 (YECA…QRSH), 463 to 485 (YICK…QRIH), 491 to 513 (YECN…QRIH), and 519 to 541 (YECK…EKVH).

This sequence belongs to the krueppel C2H2-type zinc-finger protein family.

It localises to the nucleus. Its function is as follows. May be involved in transcriptional regulation. The chain is Zinc finger protein 583 (Znf583) from Mus musculus (Mouse).